We begin with the raw amino-acid sequence, 97 residues long: Large ribosomal subunit protein uL23 (97 aa).

The protein belongs to the universal ribosomal protein uL23 family. As to quaternary structure, part of the 50S ribosomal subunit. Contacts protein L29, and trigger factor when it is bound to the ribosome.

One of the early assembly proteins it binds 23S rRNA. One of the proteins that surrounds the polypeptide exit tunnel on the outside of the ribosome. Forms the main docking site for trigger factor binding to the ribosome. The sequence is that of Large ribosomal subunit protein uL23 from Chelativorans sp. (strain BNC1).